We begin with the raw amino-acid sequence, 865 residues long: Leucine--tRNA ligase (865 aa).

The 'HIGH' region motif lies at 58–68; the sequence is PYPSGNLHMGH. The 'KMSKS' region motif lies at 629–633; that stretch reads KMSKS. Lys632 contributes to the ATP binding site.

The protein belongs to the class-I aminoacyl-tRNA synthetase family.

It is found in the cytoplasm. The catalysed reaction is tRNA(Leu) + L-leucine + ATP = L-leucyl-tRNA(Leu) + AMP + diphosphate. The polypeptide is Leucine--tRNA ligase (Synechococcus elongatus (strain ATCC 33912 / PCC 7942 / FACHB-805) (Anacystis nidulans R2)).